We begin with the raw amino-acid sequence, 1297 residues long: Phosphoribosylformylglycinamidine synthase (1297 aa).

A disordered region spans residues Pro304–Gly323. Residues Gly307–Asp318 and Ala678 each bind ATP. Mg(2+)-binding residues include Asp679, Glu718, Asn722, and Asp886. Position 888 (Ser888) interacts with ATP. Residues Arg1043 to Gly1297 enclose the Glutamine amidotransferase type-1 domain. Cys1137 (nucleophile) is an active-site residue. Active-site residues include His1262 and Glu1264.

This sequence in the N-terminal section; belongs to the FGAMS family. In terms of assembly, monomer.

The protein localises to the cytoplasm. It carries out the reaction N(2)-formyl-N(1)-(5-phospho-beta-D-ribosyl)glycinamide + L-glutamine + ATP + H2O = 2-formamido-N(1)-(5-O-phospho-beta-D-ribosyl)acetamidine + L-glutamate + ADP + phosphate + H(+). It participates in purine metabolism; IMP biosynthesis via de novo pathway; 5-amino-1-(5-phospho-D-ribosyl)imidazole from N(2)-formyl-N(1)-(5-phospho-D-ribosyl)glycinamide: step 1/2. In terms of biological role, phosphoribosylformylglycinamidine synthase involved in the purines biosynthetic pathway. Catalyzes the ATP-dependent conversion of formylglycinamide ribonucleotide (FGAR) and glutamine to yield formylglycinamidine ribonucleotide (FGAM) and glutamate. The polypeptide is Phosphoribosylformylglycinamidine synthase (Histophilus somni (strain 129Pt) (Haemophilus somnus)).